The primary structure comprises 140 residues: Putative pre-16S rRNA nuclease (140 aa).

The protein belongs to the YqgF nuclease family.

Its subcellular location is the cytoplasm. In terms of biological role, could be a nuclease involved in processing of the 5'-end of pre-16S rRNA. The chain is Putative pre-16S rRNA nuclease from Pasteurella multocida (strain Pm70).